The following is a 446-amino-acid chain: Probable ribosomal RNA small subunit methyltransferase B (446 aa).

Residues 260-266, D284, D311, and D330 each bind S-adenosyl-L-methionine; that span reads CAAPGGK. C383 functions as the Nucleophile in the catalytic mechanism.

The protein belongs to the class I-like SAM-binding methyltransferase superfamily. RsmB/NOP family.

It is found in the cytoplasm. The catalysed reaction is cytidine(967) in 16S rRNA + S-adenosyl-L-methionine = 5-methylcytidine(967) in 16S rRNA + S-adenosyl-L-homocysteine + H(+). In terms of biological role, specifically methylates the cytosine at position 967 (m5C967) of 16S rRNA. The polypeptide is Probable ribosomal RNA small subunit methyltransferase B (Synechocystis sp. (strain ATCC 27184 / PCC 6803 / Kazusa)).